The sequence spans 93 residues: YcgL domain-containing protein AHA_2135 (93 aa).

Residues 1-85 (MLCAVYKSRK…PPENLLEQHK (85 aa)) form the YcgL domain.

This chain is YcgL domain-containing protein AHA_2135, found in Aeromonas hydrophila subsp. hydrophila (strain ATCC 7966 / DSM 30187 / BCRC 13018 / CCUG 14551 / JCM 1027 / KCTC 2358 / NCIMB 9240 / NCTC 8049).